The chain runs to 620 residues: Endoglucanase 6 (620 aa).

The first 22 residues, M1–S22, serve as a signal peptide directing secretion. The Nucleophile role is filled by D78. Residues H411, D463, and E472 contribute to the active site. Residues N554 and N564 are each glycosylated (N-linked (GlcNAc...) asparagine).

It belongs to the glycosyl hydrolase 9 (cellulase E) family.

The protein resides in the secreted. The enzyme catalyses Endohydrolysis of (1-&gt;4)-beta-D-glucosidic linkages in cellulose, lichenin and cereal beta-D-glucans.. The protein is Endoglucanase 6 of Arabidopsis thaliana (Mouse-ear cress).